Here is a 292-residue protein sequence, read N- to C-terminus: 4-hydroxy-tetrahydrodipicolinate synthase (292 aa).

Thr-45 contacts pyruvate. The active-site Proton donor/acceptor is the Tyr-133. Lys-162 serves as the catalytic Schiff-base intermediate with substrate. Ile-204 contacts pyruvate.

The protein belongs to the DapA family. In terms of assembly, homotetramer; dimer of dimers.

The protein localises to the cytoplasm. The enzyme catalyses L-aspartate 4-semialdehyde + pyruvate = (2S,4S)-4-hydroxy-2,3,4,5-tetrahydrodipicolinate + H2O + H(+). Its pathway is amino-acid biosynthesis; L-lysine biosynthesis via DAP pathway; (S)-tetrahydrodipicolinate from L-aspartate: step 3/4. Functionally, catalyzes the condensation of (S)-aspartate-beta-semialdehyde [(S)-ASA] and pyruvate to 4-hydroxy-tetrahydrodipicolinate (HTPA). This chain is 4-hydroxy-tetrahydrodipicolinate synthase, found in Nitratidesulfovibrio vulgaris (strain ATCC 29579 / DSM 644 / CCUG 34227 / NCIMB 8303 / VKM B-1760 / Hildenborough) (Desulfovibrio vulgaris).